The sequence spans 117 residues: Putative small ubiquitin-related modifier 6 (117 aa).

The tract at residues 1 to 30 (MSTKSSSIHGRNEVKMEGEKRKDVESESTH) is disordered. The segment covering 10–28 (GRNEVKMEGEKRKDVESES) has biased composition (basic and acidic residues). The 78-residue stretch at 31-108 (VTLNVKGQDE…IDALLPQESG (78 aa)) folds into the Ubiquitin-like domain. Residue glycine 108 forms a Glycyl lysine isopeptide (Gly-Lys) (interchain with K-? in acceptor proteins) linkage.

This sequence belongs to the ubiquitin family. SUMO subfamily. Interacts with SAE2, SCE1, SIZ1 and MMS21 Covalently attached to a number of proteins.

The protein localises to the nucleus. It is found in the cytoplasm. Functionally, ubiquitin-like protein which can be covalently attached to target lysines as a monomer. Does not seem to be involved in protein degradation and may function as an antagonist of ubiquitin in the degradation process. This chain is Putative small ubiquitin-related modifier 6 (SUMO6), found in Arabidopsis thaliana (Mouse-ear cress).